A 299-amino-acid polypeptide reads, in one-letter code: Bifunctional protein FolD 2 (299 aa).

Residues 168 to 170 (GRS), Ser193, and Ile234 contribute to the NADP(+) site.

The protein belongs to the tetrahydrofolate dehydrogenase/cyclohydrolase family. Homodimer.

The enzyme catalyses (6R)-5,10-methylene-5,6,7,8-tetrahydrofolate + NADP(+) = (6R)-5,10-methenyltetrahydrofolate + NADPH. It carries out the reaction (6R)-5,10-methenyltetrahydrofolate + H2O = (6R)-10-formyltetrahydrofolate + H(+). It participates in one-carbon metabolism; tetrahydrofolate interconversion. Functionally, catalyzes the oxidation of 5,10-methylenetetrahydrofolate to 5,10-methenyltetrahydrofolate and then the hydrolysis of 5,10-methenyltetrahydrofolate to 10-formyltetrahydrofolate. The polypeptide is Bifunctional protein FolD 2 (Rhizobium meliloti (strain 1021) (Ensifer meliloti)).